The following is a 68-amino-acid chain: Large ribosomal subunit protein uL29 (68 aa).

Belongs to the universal ribosomal protein uL29 family.

The sequence is that of Large ribosomal subunit protein uL29 from Geobacillus sp. (strain WCH70).